Consider the following 190-residue polypeptide: Putative manganese efflux pump MntP (190 aa).

6 consecutive transmembrane segments (helical) span residues 3–23, 37–57, 72–88, 111–131, 138–158, and 164–184; these read FLQI…CSVV, LVLA…GWFI, HWIA…KMIW, IILG…LAFV, VALS…WIGH, and FGKW…ANIV.

The protein belongs to the MntP (TC 9.B.29) family.

Its subcellular location is the cell membrane. Probably functions as a manganese efflux pump. This is Putative manganese efflux pump MntP from Corynebacterium glutamicum (strain ATCC 13032 / DSM 20300 / JCM 1318 / BCRC 11384 / CCUG 27702 / LMG 3730 / NBRC 12168 / NCIMB 10025 / NRRL B-2784 / 534).